The primary structure comprises 149 residues: UPF0260 protein RCAP_rcc02083 (149 aa).

The protein belongs to the UPF0260 family.

In Rhodobacter capsulatus (strain ATCC BAA-309 / NBRC 16581 / SB1003), this protein is UPF0260 protein RCAP_rcc02083.